Here is a 168-residue protein sequence, read N- to C-terminus: Phosphopantetheine adenylyltransferase (168 aa).

Substrate is bound at residue T9. ATP contacts are provided by residues 9 to 10 and H17; that span reads TF. 3 residues coordinate substrate: K41, L73, and R87. Residues 88–90, E98, and 123–129 each bind ATP; these read GLR and YQFISGT.

It belongs to the bacterial CoaD family. As to quaternary structure, homohexamer. Mg(2+) serves as cofactor.

The protein localises to the cytoplasm. The catalysed reaction is (R)-4'-phosphopantetheine + ATP + H(+) = 3'-dephospho-CoA + diphosphate. It participates in cofactor biosynthesis; coenzyme A biosynthesis; CoA from (R)-pantothenate: step 4/5. In terms of biological role, reversibly transfers an adenylyl group from ATP to 4'-phosphopantetheine, yielding dephospho-CoA (dPCoA) and pyrophosphate. This chain is Phosphopantetheine adenylyltransferase, found in Ralstonia nicotianae (strain ATCC BAA-1114 / GMI1000) (Ralstonia solanacearum).